Here is a 237-residue protein sequence, read N- to C-terminus: Riboflavin kinase (237 aa).

The interval 1–101 (MRLKIKAIWV…SRIFSSEPDV (101 aa)) is unknown. Residues 102–237 (LELEGNVLKG…VKKQGMEGQK (136 aa)) form a riboflavin kinase region. Position 111–116 (111–116 (GLGEGQ)) interacts with CDP. Residues Thr140 and Asn142 each contribute to the Mg(2+) site. FMN-binding residues include Thr197 and Glu205. 210 to 213 (VKLR) is a CDP binding site.

The protein belongs to the archaeal riboflavin kinase family. Mg(2+) is required as a cofactor.

It carries out the reaction riboflavin + CTP = CDP + FMN + H(+). The protein operates within cofactor biosynthesis; FMN biosynthesis; FMN from riboflavin (CTP route): step 1/1. In terms of biological role, catalyzes the CTP-dependent phosphorylation of riboflavin (vitamin B2) to form flavin mononucleotide (FMN). This chain is Riboflavin kinase (ribK), found in Methanosarcina acetivorans (strain ATCC 35395 / DSM 2834 / JCM 12185 / C2A).